We begin with the raw amino-acid sequence, 547 residues long: Chaperonin GroEL (547 aa).

ATP contacts are provided by residues 29–32 (TLGP), Lys-50, 86–90 (DGTTT), Gly-414, 478–480 (NAA), and Asp-494.

It belongs to the chaperonin (HSP60) family. Forms a cylinder of 14 subunits composed of two heptameric rings stacked back-to-back. Interacts with the co-chaperonin GroES.

Its subcellular location is the cytoplasm. It carries out the reaction ATP + H2O + a folded polypeptide = ADP + phosphate + an unfolded polypeptide.. Together with its co-chaperonin GroES, plays an essential role in assisting protein folding. The GroEL-GroES system forms a nano-cage that allows encapsulation of the non-native substrate proteins and provides a physical environment optimized to promote and accelerate protein folding. The protein is Chaperonin GroEL of Saccharophagus degradans (strain 2-40 / ATCC 43961 / DSM 17024).